The chain runs to 977 residues: uncharacterized protein (977 aa).

Residues 1–24 (MQSNLLKVLGVLAIVATLVCFIFA) form the signal peptide. The interval 125–146 (TESTRPGKSNLDDKGNMIPIPR) is disordered. 6 helical membrane-spanning segments follow: residues 612 to 632 (IKAI…LGFA), 722 to 742 (LGLS…IVII), 754 to 774 (AFMA…FLLF), 796 to 816 (VVMM…LDFV), 833 to 853 (FIGT…INWF), and 866 to 886 (GVNM…YGYV). The tract at residues 918-977 (KALSPIGMDDKTRQGITGRAEARLKQRNKTLDQAEKNRKNTPKEGGEKTNAEPPQPEARG) is disordered. Basic and acidic residues predominate over residues 937 to 967 (AEARLKQRNKTLDQAEKNRKNTPKEGGEKTN).

This sequence belongs to the TrbL/VirB6 family.

The protein resides in the cell membrane. This is an uncharacterized protein from Rickettsia felis (strain ATCC VR-1525 / URRWXCal2) (Rickettsia azadi).